Consider the following 96-residue polypeptide: Co-chaperonin GroES (96 aa).

Belongs to the GroES chaperonin family. In terms of assembly, heptamer of 7 subunits arranged in a ring. Interacts with the chaperonin GroEL.

The protein localises to the cytoplasm. In terms of biological role, together with the chaperonin GroEL, plays an essential role in assisting protein folding. The GroEL-GroES system forms a nano-cage that allows encapsulation of the non-native substrate proteins and provides a physical environment optimized to promote and accelerate protein folding. GroES binds to the apical surface of the GroEL ring, thereby capping the opening of the GroEL channel. This is Co-chaperonin GroES from Shewanella oneidensis (strain ATCC 700550 / JCM 31522 / CIP 106686 / LMG 19005 / NCIMB 14063 / MR-1).